The primary structure comprises 346 residues: Quinolinate synthase (346 aa).

The iminosuccinate site is built by H47 and S68. C113 is a binding site for [4Fe-4S] cluster. Residues 139-141 and S156 contribute to the iminosuccinate site; that span reads YAN. C200 contacts [4Fe-4S] cluster. Iminosuccinate-binding positions include 226–228 and T243; that span reads HPE. C297 lines the [4Fe-4S] cluster pocket.

Belongs to the quinolinate synthase family. Type 1 subfamily. It depends on [4Fe-4S] cluster as a cofactor.

The protein resides in the cytoplasm. It catalyses the reaction iminosuccinate + dihydroxyacetone phosphate = quinolinate + phosphate + 2 H2O + H(+). The protein operates within cofactor biosynthesis; NAD(+) biosynthesis; quinolinate from iminoaspartate: step 1/1. Catalyzes the condensation of iminoaspartate with dihydroxyacetone phosphate to form quinolinate. This is Quinolinate synthase from Photorhabdus laumondii subsp. laumondii (strain DSM 15139 / CIP 105565 / TT01) (Photorhabdus luminescens subsp. laumondii).